Here is a 768-residue protein sequence, read N- to C-terminus: DNA ligase (768 aa).

A compositionally biased stretch (low complexity) spans 1–11 (MSPSAPANSAP). The disordered stretch occupies residues 1–28 (MSPSAPANSAPDPDRNGVPDVGPASAAP). Residues 62-66 (DAEYD), 111-112 (SI), and glutamate 148 contribute to the NAD(+) site. Lysine 150 serves as the catalytic N6-AMP-lysine intermediate. Residues arginine 171, glutamate 238, lysine 361, and lysine 385 each contribute to the NAD(+) site. Zn(2+) is bound by residues cysteine 484, cysteine 487, cysteine 502, and cysteine 508. In terms of domain architecture, BRCT spans 670–759 (AAELPLAGKT…EADADADAEG (90 aa)).

It belongs to the NAD-dependent DNA ligase family. LigA subfamily. Mg(2+) serves as cofactor. Mn(2+) is required as a cofactor.

It carries out the reaction NAD(+) + (deoxyribonucleotide)n-3'-hydroxyl + 5'-phospho-(deoxyribonucleotide)m = (deoxyribonucleotide)n+m + AMP + beta-nicotinamide D-nucleotide.. Functionally, DNA ligase that catalyzes the formation of phosphodiester linkages between 5'-phosphoryl and 3'-hydroxyl groups in double-stranded DNA using NAD as a coenzyme and as the energy source for the reaction. It is essential for DNA replication and repair of damaged DNA. This chain is DNA ligase, found in Leptothrix cholodnii (strain ATCC 51168 / LMG 8142 / SP-6) (Leptothrix discophora (strain SP-6)).